A 143-amino-acid polypeptide reads, in one-letter code: Small ribosomal subunit protein bS6 (143 aa).

Residues 96-143 (VTEASPMAAAKEERRDDRREVKKDVAAAPVEAKEDSVEEKSEEAASEE) are disordered. The span at 105–143 (AKEERRDDRREVKKDVAAAPVEAKEDSVEEKSEEAASEE) shows a compositional bias: basic and acidic residues.

It belongs to the bacterial ribosomal protein bS6 family.

Functionally, binds together with bS18 to 16S ribosomal RNA. The protein is Small ribosomal subunit protein bS6 of Colwellia psychrerythraea (strain 34H / ATCC BAA-681) (Vibrio psychroerythus).